Here is a 654-residue protein sequence, read N- to C-terminus: Fructose-1,6-bisphosphatase class 3 (654 aa).

It belongs to the FBPase class 3 family. The cofactor is Mn(2+).

The enzyme catalyses beta-D-fructose 1,6-bisphosphate + H2O = beta-D-fructose 6-phosphate + phosphate. It functions in the pathway carbohydrate biosynthesis; gluconeogenesis. The sequence is that of Fructose-1,6-bisphosphatase class 3 from Staphylococcus epidermidis (strain ATCC 35984 / DSM 28319 / BCRC 17069 / CCUG 31568 / BM 3577 / RP62A).